The sequence spans 177 residues: Interleukin-1 receptor antagonist protein (177 aa).

Positions Met-1–Cys-25 are cleaved as a signal peptide. A disulfide bond links Cys-91 and Cys-141. Residue Asn-109 is glycosylated (N-linked (GlcNAc...) asparagine).

Belongs to the IL-1 family.

It localises to the secreted. Its function is as follows. Anti-inflammatory antagonist of interleukin-1 family of proinflammatory cytokines such as interleukin-1beta/IL1B and interleukin-1alpha/IL1A. Protects from immune dysregulation and uncontrolled systemic inflammation triggered by IL1 for a range of innate stimulatory agents such as pathogens. This is Interleukin-1 receptor antagonist protein (IL1RN) from Oryctolagus cuniculus (Rabbit).